We begin with the raw amino-acid sequence, 453 residues long: Bifunctional protein GlmU (453 aa).

A pyrophosphorylase region spans residues 1 to 226 (MSFSAVILAA…PIEVEGVNNR (226 aa)). Residues 8-11 (LAAG), lysine 22, glutamine 73, 78-79 (GT), 100-102 (YGD), glycine 137, glutamate 151, asparagine 166, and asparagine 224 contribute to the UDP-N-acetyl-alpha-D-glucosamine site. Mg(2+) is bound at residue aspartate 102. A Mg(2+)-binding site is contributed by asparagine 224. The linker stretch occupies residues 227-247 (IQLARLERAYQAMQAERLLEQ). Residues 248–453 (GVMLRDPSRF…KGWKRPVKQK (206 aa)) are N-acetyltransferase. Residues arginine 330 and lysine 348 each coordinate UDP-N-acetyl-alpha-D-glucosamine. Catalysis depends on histidine 360, which acts as the Proton acceptor. UDP-N-acetyl-alpha-D-glucosamine contacts are provided by tyrosine 363 and asparagine 374. Acetyl-CoA-binding positions include alanine 377, 383 to 384 (NY), serine 402, alanine 420, and arginine 437.

The protein in the N-terminal section; belongs to the N-acetylglucosamine-1-phosphate uridyltransferase family. In the C-terminal section; belongs to the transferase hexapeptide repeat family. As to quaternary structure, homotrimer. Requires Mg(2+) as cofactor.

The protein resides in the cytoplasm. The enzyme catalyses alpha-D-glucosamine 1-phosphate + acetyl-CoA = N-acetyl-alpha-D-glucosamine 1-phosphate + CoA + H(+). It catalyses the reaction N-acetyl-alpha-D-glucosamine 1-phosphate + UTP + H(+) = UDP-N-acetyl-alpha-D-glucosamine + diphosphate. It participates in nucleotide-sugar biosynthesis; UDP-N-acetyl-alpha-D-glucosamine biosynthesis; N-acetyl-alpha-D-glucosamine 1-phosphate from alpha-D-glucosamine 6-phosphate (route II): step 2/2. It functions in the pathway nucleotide-sugar biosynthesis; UDP-N-acetyl-alpha-D-glucosamine biosynthesis; UDP-N-acetyl-alpha-D-glucosamine from N-acetyl-alpha-D-glucosamine 1-phosphate: step 1/1. The protein operates within bacterial outer membrane biogenesis; LPS lipid A biosynthesis. In terms of biological role, catalyzes the last two sequential reactions in the de novo biosynthetic pathway for UDP-N-acetylglucosamine (UDP-GlcNAc). The C-terminal domain catalyzes the transfer of acetyl group from acetyl coenzyme A to glucosamine-1-phosphate (GlcN-1-P) to produce N-acetylglucosamine-1-phosphate (GlcNAc-1-P), which is converted into UDP-GlcNAc by the transfer of uridine 5-monophosphate (from uridine 5-triphosphate), a reaction catalyzed by the N-terminal domain. The protein is Bifunctional protein GlmU of Photobacterium profundum (strain SS9).